The following is a 484-amino-acid chain: tRNA sulfurtransferase (484 aa).

Residues 63 to 167 enclose the THUMP domain; the sequence is QAFGERLACI…GDKLYMVTKR (105 aa). ATP-binding positions include 185 to 186, Lys267, Gly289, and Gln298; that span reads LI. A disulfide bridge links Cys346 with Cys458. The Rhodanese domain occupies 406-484; sequence IDTNEVVIDI…GYHNVKVYRP (79 aa). The Cysteine persulfide intermediate role is filled by Cys458.

This sequence belongs to the ThiI family.

It is found in the cytoplasm. The catalysed reaction is [ThiI sulfur-carrier protein]-S-sulfanyl-L-cysteine + a uridine in tRNA + 2 reduced [2Fe-2S]-[ferredoxin] + ATP + H(+) = [ThiI sulfur-carrier protein]-L-cysteine + a 4-thiouridine in tRNA + 2 oxidized [2Fe-2S]-[ferredoxin] + AMP + diphosphate. The enzyme catalyses [ThiS sulfur-carrier protein]-C-terminal Gly-Gly-AMP + S-sulfanyl-L-cysteinyl-[cysteine desulfurase] + AH2 = [ThiS sulfur-carrier protein]-C-terminal-Gly-aminoethanethioate + L-cysteinyl-[cysteine desulfurase] + A + AMP + 2 H(+). The protein operates within cofactor biosynthesis; thiamine diphosphate biosynthesis. Functionally, catalyzes the ATP-dependent transfer of a sulfur to tRNA to produce 4-thiouridine in position 8 of tRNAs, which functions as a near-UV photosensor. Also catalyzes the transfer of sulfur to the sulfur carrier protein ThiS, forming ThiS-thiocarboxylate. This is a step in the synthesis of thiazole, in the thiamine biosynthesis pathway. The sulfur is donated as persulfide by IscS. The polypeptide is tRNA sulfurtransferase (Shewanella oneidensis (strain ATCC 700550 / JCM 31522 / CIP 106686 / LMG 19005 / NCIMB 14063 / MR-1)).